The primary structure comprises 66 residues: Large ribosomal subunit protein uL29c (66 aa).

The protein belongs to the universal ribosomal protein uL29 family.

The protein resides in the plastid. It is found in the chloroplast. The polypeptide is Large ribosomal subunit protein uL29c (Gracilaria tenuistipitata var. liui (Red alga)).